Reading from the N-terminus, the 321-residue chain is MTKYALVGDVGGTNARLALCDIASGEISQAKTYSGLDYPSLEAVVRVYLDEHSVSVEDGCIAIACPITGDWVAMTNHTWAFSIAEMKKNLGFSHLEIINDFTAVSMAIPMLKKEHLIQFGGGEPVDGKPIAVYGAGTGLGVAHLVHVDKRWISLPGEGGHVDFAPNSEEEAMILEILRAEIGHVSAERVLSGPGLVNLYRAIVKSDNRLPENLRPKDITERALADNCIDCRRALSLFCVIMGRFGGDLALTMGTYGGVYIAGGIVPRFLEFFKASGFRGGFEDKGRFKDYVHGIPVYLIVHDNPGLLGSGAHLRQTLGHIL.

8–13 contributes to the ATP binding site; it reads GDVGGT.

Belongs to the bacterial glucokinase family.

The protein localises to the cytoplasm. The catalysed reaction is D-glucose + ATP = D-glucose 6-phosphate + ADP + H(+). This Salmonella heidelberg (strain SL476) protein is Glucokinase.